Consider the following 100-residue polypeptide: Cytochrome b (100 aa).

3 helical membrane passes run 1 to 21, 45 to 66, and 81 to 100; these read MGSL…FLAM, WLIR…YLHI, and WNIG…VGYV. Heme b contacts are provided by His-51 and His-65.

This sequence belongs to the cytochrome b family. As to quaternary structure, the cytochrome bc1 complex contains 3 respiratory subunits (MT-CYB, CYC1 and UQCRFS1), 2 core proteins (UQCRC1 and UQCRC2) and probably 6 low-molecular weight proteins. It depends on heme b as a cofactor.

The protein localises to the mitochondrion inner membrane. Its function is as follows. Component of the ubiquinol-cytochrome c reductase complex (complex III or cytochrome b-c1 complex) that is part of the mitochondrial respiratory chain. The b-c1 complex mediates electron transfer from ubiquinol to cytochrome c. Contributes to the generation of a proton gradient across the mitochondrial membrane that is then used for ATP synthesis. This Polypterus sp. (Bichir) protein is Cytochrome b (mt-cyb).